The following is a 135-amino-acid chain: Biglycan (135 aa).

5 LRR repeats span residues 4–24, 25–46, 49–72, 73–95, and 96–117; these read KLNY…DLPE, TLNE…DLLR, KLYR…SFLP, TLRE…PDLK, and LLQV…DFCP. N65 carries N-linked (GlcNAc...) asparagine glycosylation. An N-linked (GlcNAc...) asparagine glycan is attached at N106.

It belongs to the small leucine-rich proteoglycan (SLRP) family. SLRP class I subfamily. In terms of assembly, homodimer. Forms a ternary complex with MFAP2 and ELN. The two attached glycosaminoglycan chains can be either chondroitin sulfate or dermatan sulfate. Found in several connective tissues, especially in articular cartilages.

It localises to the secreted. It is found in the extracellular space. The protein resides in the extracellular matrix. May be involved in collagen fiber assembly. This is Biglycan (BGN) from Oryctolagus cuniculus (Rabbit).